We begin with the raw amino-acid sequence, 573 residues long: Ascochitine biosynthesis cluster transcriptional regulator (573 aa).

It localises to the nucleus. In terms of biological role, transcription factor that regulates the expression of the gene cluster that mediates the biosynthesis of the mycotoxin ascochitine, an o-quinone methide that plays a possible protective role against other microbial competitors in nature and is considered to be important for pathogenicity of legume-associated Didymella species. In Didymella fabae (Leaf and pod spot disease fungus), this protein is Ascochitine biosynthesis cluster transcriptional regulator.